Reading from the N-terminus, the 1049-residue chain is Solvent-resistant pump membrane transporter SrpB (1049 aa).

A run of 12 helical transmembrane segments spans residues 10–30 (IFAW…LAKM), 339–359 (SVVH…YLFL), 366–386 (LIPT…LPYF), 392–412 (VLTM…AIVV), 440–460 (GALV…AFFG), 470–490 (FAIT…VFTP), 542–562 (LAFL…PKAF), 871–891 (APLL…ALYE), 895–915 (VPVS…LATL), 927–947 (VGLM…VEFA), 973–993 (ILMT…ASGA), and 1008–1028 (GMIT…VVVV).

Belongs to the resistance-nodulation-cell division (RND) (TC 2.A.6) family.

Its subcellular location is the cell inner membrane. Its function is as follows. The inner membrane transporter component of an organic solvent efflux pump. Involved in export of a number of low log POW compounds including hexane (log POW 3.5), toluene (log POW 2.5) and dimethylphthalate (log POW 2.3). The solvent resistance phenotype has been postulated to depend on the operon expression level. This Pseudomonas putida (Arthrobacter siderocapsulatus) protein is Solvent-resistant pump membrane transporter SrpB (srpB).